A 576-amino-acid chain; its full sequence is K(+)/H(+) antiporter NhaP2 (576 aa).

13 consecutive transmembrane segments (helical) span residues 6–26, 34–54, 58–78, 87–107, 109–129, 163–183, 185–205, 219–239, 242–262, 271–291, 299–319, 335–355, and 359–379; these read INSF…LSPM, ILLI…GGIL, YSTA…DGGM, VALW…TSIT, MMAA…GAIV, PMAV…DTEM, FSFM…LGLG, LADG…YAAS, LGGS…NKPT, VLDG…GLLL, ILIP…PVAV, WFIS…VFPM, and LPGA…SLLV. The RCK C-terminal domain occupies 405–486; the sequence is SGVEIYPSSE…LEALSNLFSQ (82 aa).

Belongs to the monovalent cation:proton antiporter 1 (CPA1) transporter (TC 2.A.36) family. NhaP2 subfamily.

The protein localises to the cell inner membrane. It catalyses the reaction K(+)(in) + H(+)(out) = K(+)(out) + H(+)(in). Functionally, k(+)/H(+) antiporter that extrudes potassium in exchange for external protons and maintains the internal concentration of potassium under toxic levels. The protein is K(+)/H(+) antiporter NhaP2 of Shewanella baltica (strain OS223).